We begin with the raw amino-acid sequence, 294 residues long: Phosphatidylserine decarboxylase proenzyme (294 aa).

Catalysis depends on charge relay system; for autoendoproteolytic cleavage activity residues D100, H157, and S261. S261 functions as the Schiff-base intermediate with substrate; via pyruvic acid; for decarboxylase activity in the catalytic mechanism. A Pyruvic acid (Ser); by autocatalysis modification is found at S261.

Belongs to the phosphatidylserine decarboxylase family. PSD-B subfamily. Prokaryotic type I sub-subfamily. Heterodimer of a large membrane-associated beta subunit and a small pyruvoyl-containing alpha subunit. It depends on pyruvate as a cofactor. Is synthesized initially as an inactive proenzyme. Formation of the active enzyme involves a self-maturation process in which the active site pyruvoyl group is generated from an internal serine residue via an autocatalytic post-translational modification. Two non-identical subunits are generated from the proenzyme in this reaction, and the pyruvate is formed at the N-terminus of the alpha chain, which is derived from the carboxyl end of the proenzyme. The autoendoproteolytic cleavage occurs by a canonical serine protease mechanism, in which the side chain hydroxyl group of the serine supplies its oxygen atom to form the C-terminus of the beta chain, while the remainder of the serine residue undergoes an oxidative deamination to produce ammonia and the pyruvoyl prosthetic group on the alpha chain. During this reaction, the Ser that is part of the protease active site of the proenzyme becomes the pyruvoyl prosthetic group, which constitutes an essential element of the active site of the mature decarboxylase.

The protein localises to the cell membrane. The enzyme catalyses a 1,2-diacyl-sn-glycero-3-phospho-L-serine + H(+) = a 1,2-diacyl-sn-glycero-3-phosphoethanolamine + CO2. The protein operates within phospholipid metabolism; phosphatidylethanolamine biosynthesis; phosphatidylethanolamine from CDP-diacylglycerol: step 2/2. Functionally, catalyzes the formation of phosphatidylethanolamine (PtdEtn) from phosphatidylserine (PtdSer). In Mannheimia succiniciproducens (strain KCTC 0769BP / MBEL55E), this protein is Phosphatidylserine decarboxylase proenzyme.